Reading from the N-terminus, the 254-residue chain is uncharacterized protein (254 aa).

One can recognise an ABC transporter domain in the interval 6–239 (LSVDGVEFAY…NIKAVYGVDA (234 aa)). ATP is bound at residue 38-45 (GVNGAGKS).

It belongs to the ABC transporter superfamily.

This is an uncharacterized protein from Methanocaldococcus jannaschii (strain ATCC 43067 / DSM 2661 / JAL-1 / JCM 10045 / NBRC 100440) (Methanococcus jannaschii).